A 509-amino-acid chain; its full sequence is Maturase K (509 aa).

It belongs to the intron maturase 2 family. MatK subfamily.

It localises to the plastid. It is found in the chloroplast. In terms of biological role, usually encoded in the trnK tRNA gene intron. Probably assists in splicing its own and other chloroplast group II introns. The sequence is that of Maturase K from Atropa belladonna (Belladonna).